The sequence spans 288 residues: Scolexin B (288 aa).

The first 20 residues, 1-20 (MFASKLAVCSALALLAVAHA), serve as a signal peptide directing secretion. The Peptidase S1 domain maps to 21-287 (APGGNDIQKI…VRDWIKKVTN (267 aa)). The disordered stretch occupies residues 27 to 56 (IQKITKAPNVPTKAEGDAASKASAPAIPPK). A disulfide bridge links cysteine 72 with cysteine 88. Active-site charge relay system residues include histidine 87 and aspartate 145. 2 disulfide bridges follow: cysteine 210–cysteine 223 and cysteine 235–cysteine 264. Serine 239 (charge relay system) is an active-site residue.

It belongs to the peptidase S1 family.

This is Scolexin B from Heliothis virescens (Tobacco budworm moth).